The primary structure comprises 487 residues: Sodium-coupled neutral amino acid symporter 1 (487 aa).

Residues 1 to 74 (MMHFKSGLEL…EYIPGTTSLG (74 aa)) are Cytoplasmic-facing. Residue Ser6 is modified to Phosphoserine. Thr11 is subject to Phosphothreonine. Phosphoserine occurs at positions 25, 28, 49, and 52. Thr54 carries the phosphothreonine modification. The residue at position 56 (Ser56) is a Phosphoserine. The helical transmembrane segment at 75-97 (MSVFNLSNAIMGSGILGLAFALA) threads the bilayer. The Extracellular portion of the chain corresponds to 98 to 112 (NTGILLFLVLLTSVT). A helical transmembrane segment spans residues 113 to 133 (LLSIYSINLLLICSKETGCMV). Over 134–147 (YEKLGEQVFGTTGK) the chain is Cytoplasmic. A helical membrane pass occupies residues 148–168 (FVIFGATSLQNTGAMLSYLFI). Topologically, residues 169–188 (VKNELPSAIKFLMGKEETFS) are extracellular. The chain crosses the membrane as a helical span at residues 189–211 (AWYVDGRVLVVIVTFGIILPLCL). Residues 212-216 (LKNLG) are Cytoplasmic-facing. The helical transmembrane segment at 217–237 (YLGYTSGFSLSCMVFFLIVVI) threads the bilayer. Residues 238-275 (YKKFQIPCIVPELNSTISANSTNADTCTPKYVTFNSKT) lie on the Extracellular side of the membrane. An intrachain disulfide couples Cys245 to Cys264. Residues Asn251 and Asn257 are each glycosylated (N-linked (GlcNAc...) asparagine). A helical transmembrane segment spans residues 276 to 296 (VYALPTIAFAFVCHPSVLPIY). Residues 297-312 (SELKDRSQKKMQMVSN) lie on the Cytoplasmic side of the membrane. Residues 313 to 333 (ISFFAMFVMYFLTAIFGYLTF) traverse the membrane as a helical segment. Over 334–350 (YDNVQSDLLHKYQSKDD) the chain is Extracellular. Residues 351 to 371 (ILILTVRLAVIVAVILTVPVL) form a helical membrane-spanning segment. The Cytoplasmic segment spans residues 372–393 (FFTVRSSLFELAKKTKFNLCRH). A helical transmembrane segment spans residues 394 to 414 (TVVTCILLVVINLLVIFIPSM). Topologically, residues 415–416 (KD) are extracellular. A helical transmembrane segment spans residues 417–437 (IFGVVGVTSANMLIFILPSSL). The Cytoplasmic segment spans residues 438 to 452 (YLKITDQDGDKGTQR). A helical transmembrane segment spans residues 453–473 (IWAALFLGLGVLFSLVSIPLV). Over 474–487 (IYDWACSSSSDEGH) the chain is Extracellular.

It belongs to the amino acid/polyamine transporter 2 family. N-glycosylation plays an important role in the L-glutamine transport. In terms of tissue distribution, expressed in the cerebral cortex by pyramidal and GABAergic neurons, astrocytes and other non-neuronal cells (at protein level). Expressed in placenta, heart, lung, skeletal muscle, spleen, stomach and testis. Highly expressed in cytotrophoblast cells from term placenta.

The protein resides in the cell membrane. The enzyme catalyses L-glutamine(in) + Na(+)(in) = L-glutamine(out) + Na(+)(out). It carries out the reaction L-alanine(in) + Na(+)(in) = L-alanine(out) + Na(+)(out). The catalysed reaction is L-asparagine(in) + Na(+)(in) = L-asparagine(out) + Na(+)(out). It catalyses the reaction L-histidine(in) + Na(+)(in) = L-histidine(out) + Na(+)(out). The enzyme catalyses L-serine(in) + Na(+)(in) = L-serine(out) + Na(+)(out). It carries out the reaction L-cysteine(in) + Na(+)(in) = L-cysteine(out) + Na(+)(out). The catalysed reaction is L-methionine(in) + Na(+)(in) = L-methionine(out) + Na(+)(out). It catalyses the reaction glycine(in) + Na(+)(in) = glycine(out) + Na(+)(out). The enzyme catalyses L-threonine(in) + Na(+)(in) = L-threonine(out) + Na(+)(out). It carries out the reaction L-proline(in) + Na(+)(in) = L-proline(out) + Na(+)(out). With respect to regulation, inhibited by alpha-(methylamino)isobutyric acid (MeAIB). Inhibited by lithium, potassium, choline ions, N-methylglucamine. The pH dependence has an allosteric effect on the transport. Functionally, symporter that cotransports short-chain neutral amino acids and sodium ions from the extraccellular to the intracellular side of the cell membrane. The transport is elctrogenic, pH dependent and driven by the Na(+) electrochemical gradient. Participates in the astroglia-derived glutamine transport into GABAergic interneurons for neurotransmitter GABA de novo synthesis. May also contributes to amino acid transport in placental trophoblasts. Also regulates synaptic plasticity. In Homo sapiens (Human), this protein is Sodium-coupled neutral amino acid symporter 1 (SLC38A1).